Here is a 541-residue protein sequence, read N- to C-terminus: uncharacterized protein (541 aa).

An N-terminal signal peptide occupies residues 1 to 17 (MSFSATILFSPPSGSEA). 2 disordered regions span residues 28-47 (TSQG…TPIT) and 103-138 (GKVC…SNSL). The span at 103–116 (GKVCTADEDRESRA) shows a compositional bias: basic and acidic residues. Threonine 118 carries the post-translational modification Phosphothreonine. Glycyl lysine isopeptide (Lys-Gly) (interchain with G-Cter in SUMO2) cross-links involve residues lysine 128 and lysine 223. The residue at position 226 (serine 226) is a Phosphoserine. The segment covering 232–243 (AIQRASSETGPE) has biased composition (polar residues). The tract at residues 232–254 (AIQRASSETGPESGTKLPATRPE) is disordered. A phosphoserine mark is found at serine 286 and serine 429. The segment at 494-526 (YNPNFQEDEGGGNEKGPVSPSYDQPHKTSCPDL) is disordered.

It is found in the secreted. This is an uncharacterized protein from Mus musculus (Mouse).